The chain runs to 88 residues: Conotoxin tx9a (88 aa).

An N-terminal signal peptide occupies residues 1–27 (MHLSLARSAVLMLLLLFALGNFVVVQS). The propeptide occupies 28–58 (GQITRDVDNGQLTDNRRNLQSKWKPVSLYMS). Cystine bridges form between Cys62–Cys76, Cys66–Cys78, and Cys72–Cys83. Glu68 and Glu73 each carry 4-carboxyglutamate; partial. Asn87 is subject to Asparagine amide.

Exists in 4 different forms, depending on gamma-carboxyglutamations. Tx9a-EE does not contain gamma-carboxyglutamate, tx9a-E/gamma has one gamma-carboxyglutamate at position 73, tx9a-gamma/E has one gamma-carboxyglutamate at position 68, and tx9a-agmma/gamma has two gamma-carboxyglutamates at positions 68 and 73. Expressed by the venom duct. All different gamma-carboxyalted forms are mostly present in part 2, part 3 and part 4 of the venom duct. They are also found in part 1 (proximal part near the venom bulb) and part 5, but in lower quantity.

It localises to the secreted. In terms of biological role, neurotoxin. In vivo, intracranial injection into mice of 10 pmol/g of the peptide induces running in circles and hyperactivity. At higher doses (50 pmol/g), the mice exhibit running and climbing symptoms for close to one hour. Between 130 and 150 pmol/g, characteristic 'spasmodic' symptomatology is elicited. A hand clap would make mice jump high and start running rapidly. When exposed to a loud hand clap, or if the cage cover were dropped, the mice lose motor control and exhibit seizure-like symptoms from which they eventually recover. At the highest doses tested (over 250 pmol/g), after the characteristic spasmodic symptomatology, lethality occurs. Injection of a similar dose range intramuscularly into Siamese fighting fish elicited no unusual symptomatology. The protein is Conotoxin tx9a of Conus textile (Cloth-of-gold cone).